Reading from the N-terminus, the 405-residue chain is MENIMTLPKIKQVRAWFTGGATAEKGAGGGDYHDQGANHWIDDHIATPMSKYRDYEQSRQSFGINVLGTLVVEVEAENGQTGFAVSTAGEMGCFIVEKHLNRFIEGKCVSDIKLIHDQMLSATLYYSGSGGLVMNTISCVDLALWDLFGKVVGLPVYKLLGGAVRDEIQFYATGARPDLAKEMGFIGGKMPTHWGPHDGDAGIRKDAAMVADMREKCGEDFWLMLDCWMSQDVNYATKLAHACAPYNLKWIEECLPPQQYESYRELKRNAPVGMMVTSGEHHGTLQSFRTLSETGIDIMQPDVGWCGGLTTLVEIAAIAKSRGQLVVPHGSSVYSHHAVITFTNTPFSEFLMTSPDCSTMRPQFDPILLNEPVPVNGRIHKSVLDKPGFGVELNRDCNLKRPYSH.

His-33 and Arg-59 together coordinate substrate. Mg(2+) contacts are provided by Asp-226, Glu-252, and Glu-280. His-329 serves as the catalytic Proton acceptor. A substrate-binding site is contributed by Glu-349.

This sequence belongs to the mandelate racemase/muconate lactonizing enzyme family. RhamD subfamily. Homooctamer; tetramer of dimers. The cofactor is Mg(2+).

The enzyme catalyses L-rhamnonate = 2-dehydro-3-deoxy-L-rhamnonate + H2O. Its function is as follows. Catalyzes the dehydration of L-rhamnonate to 2-keto-3-deoxy-L-rhamnonate (KDR). This is L-rhamnonate dehydratase from Escherichia coli (strain K12 / DH10B).